We begin with the raw amino-acid sequence, 349 residues long: Protein-glutamate methylesterase/protein-glutamine glutaminase (349 aa).

The Response regulatory domain occupies arginine 5–leucine 122. The residue at position 56 (aspartate 56) is a 4-aspartylphosphate. Residues leucine 152–glycine 344 enclose the CheB-type methylesterase domain. Residues serine 164, histidine 190, and aspartate 286 contribute to the active site.

Belongs to the CheB family. Post-translationally, phosphorylated by CheA. Phosphorylation of the N-terminal regulatory domain activates the methylesterase activity.

The protein localises to the cytoplasm. It carries out the reaction [protein]-L-glutamate 5-O-methyl ester + H2O = L-glutamyl-[protein] + methanol + H(+). The catalysed reaction is L-glutaminyl-[protein] + H2O = L-glutamyl-[protein] + NH4(+). Its function is as follows. Involved in chemotaxis. Part of a chemotaxis signal transduction system that modulates chemotaxis in response to various stimuli. Catalyzes the demethylation of specific methylglutamate residues introduced into the chemoreceptors (methyl-accepting chemotaxis proteins or MCP) by CheR. Also mediates the irreversible deamidation of specific glutamine residues to glutamic acid. This is Protein-glutamate methylesterase/protein-glutamine glutaminase from Yersinia pseudotuberculosis serotype I (strain IP32953).